Here is a 251-residue protein sequence, read N- to C-terminus: Flap endonuclease Xni (251 aa).

Asp-104 serves as a coordination point for Mg(2+). In terms of domain architecture, 5'-3' exonuclease spans 160–249 (VQPQQLPDYW…IDGNLQQLRL (90 aa)). Residues Leu-171, Ala-172, Pro-180, Val-182, and Ile-185 each coordinate K(+). An interaction with DNA region spans residues 184–189 (GIGPKS).

Belongs to the Xni family. Requires Mg(2+) as cofactor. It depends on K(+) as a cofactor.

In terms of biological role, has flap endonuclease activity. During DNA replication, flap endonucleases cleave the 5'-overhanging flap structure that is generated by displacement synthesis when DNA polymerase encounters the 5'-end of a downstream Okazaki fragment. In Shigella flexneri serotype 5b (strain 8401), this protein is Flap endonuclease Xni.